A 109-amino-acid polypeptide reads, in one-letter code: Acylphosphatase (109 aa).

Positions 22–109 (RLRARVEGVV…GEFSSFDVVY (88 aa)) constitute an Acylphosphatase-like domain. Residues Arg-37 and Asn-55 contribute to the active site.

This sequence belongs to the acylphosphatase family.

The enzyme catalyses an acyl phosphate + H2O = a carboxylate + phosphate + H(+). This is Acylphosphatase (acyP) from Arthrobacter sp. (strain FB24).